We begin with the raw amino-acid sequence, 968 residues long: RNA polymerase-associated protein RapA (968 aa).

The Helicase ATP-binding domain maps to 163–332 (EVGQRFAPRV…FARLRLLDPD (170 aa)). 176–183 (DEVGLGKT) provides a ligand contact to ATP. The DEAH box motif lies at 278 to 281 (DEAH). The Helicase C-terminal domain maps to 491-678 (RVDWLIDFLK…GTKARYQELK (188 aa)).

It belongs to the SNF2/RAD54 helicase family. RapA subfamily. In terms of assembly, interacts with the RNAP. Has a higher affinity for the core RNAP than for the holoenzyme. Its ATPase activity is stimulated by binding to RNAP.

Its function is as follows. Transcription regulator that activates transcription by stimulating RNA polymerase (RNAP) recycling in case of stress conditions such as supercoiled DNA or high salt concentrations. Probably acts by releasing the RNAP, when it is trapped or immobilized on tightly supercoiled DNA. Does not activate transcription on linear DNA. Probably not involved in DNA repair. This is RNA polymerase-associated protein RapA from Shewanella pealeana (strain ATCC 700345 / ANG-SQ1).